Reading from the N-terminus, the 388-residue chain is Leucine aminopeptidase 1 (388 aa).

The signal sequence occupies residues 1-19; the sequence is MKSLSLLALAAIAPPAAVA. Positions 20-88 are excised as a propeptide; it reads AVVDHQVPFE…SVKSHERIQV (69 aa). Residue N180 is glycosylated (N-linked (GlcNAc...) asparagine). The Zn(2+) site is built by H188, D207, E246, and D273. A disulfide bridge links C322 with C326. H355 contacts Zn(2+).

This sequence belongs to the peptidase M28 family. M28E subfamily. Monomer. Zn(2+) is required as a cofactor.

It localises to the secreted. Functionally, extracellular aminopeptidase that allows assimilation of proteinaceous substrates. The chain is Leucine aminopeptidase 1 (LAP1) from Coccidioides posadasii (strain RMSCC 757 / Silveira) (Valley fever fungus).